The chain runs to 161 residues: Short form salivary protein D7S (161 aa).

Residues 1 to 18 (MKFPSILLAILLFKPITA) form the signal peptide. Intrachain disulfides connect Cys33/Cys67, Cys47/Cys155, and Cys109/Cys125.

This sequence belongs to the PBP/GOBP family.

It is found in the secreted. In terms of biological role, in contrast to the related D7 salivary proteins, does not bind serotonin. This chain is Short form salivary protein D7S, found in Culex quinquefasciatus (Southern house mosquito).